Here is a 320-residue protein sequence, read N- to C-terminus: Ribose-phosphate pyrophosphokinase 3 (320 aa).

Residues D131, H133, D142, and D146 each contribute to the Mg(2+) site.

Belongs to the ribose-phosphate pyrophosphokinase family.

It localises to the cytoplasm. The catalysed reaction is D-ribose 5-phosphate + ATP = 5-phospho-alpha-D-ribose 1-diphosphate + AMP + H(+). The protein operates within metabolic intermediate biosynthesis; 5-phospho-alpha-D-ribose 1-diphosphate biosynthesis; 5-phospho-alpha-D-ribose 1-diphosphate from D-ribose 5-phosphate (route I): step 1/1. 5-phosphoribose 1-diphosphate synthase involved in nucleotide, histidine, and tryptophan biosynthesis. Active in heteromultimeric complexes with other 5-phosphoribose 1-diphosphate synthases (PRS2, PRS3, PRS4 and PRS5). In Saccharomyces cerevisiae (strain ATCC 204508 / S288c) (Baker's yeast), this protein is Ribose-phosphate pyrophosphokinase 3 (PRS3).